The primary structure comprises 1160 residues: Nonribosomal peptide synthetase fmqC (1160 aa).

The adenylation stretch occupies residues 132–520 (TYRELNDRSS…LGEVEHALQQ (389 aa)). One can recognise a Carrier domain in the interval 642 to 719 (QPVTQLEESL…EMAGMLDGVT (78 aa)). At Ser679 the chain carries O-(pantetheine 4'-phosphoryl)serine. The condensation stretch occupies residues 749–1025 (CTLEDLQEGF…CAAAETPMRI (277 aa)).

Belongs to the NRP synthetase family. Interacts with the mitogen-activated protein kinase mpkA. Post-translationally, phosphorylated by mpkA during conidiogenesis.

It localises to the cytoplasm. Its pathway is alkaloid biosynthesis. Nonribosomal peptide synthetase; part of the gene cluster that mediates the biosynthesis of the antitumor fumiquinazolines that confer a dual-usage capability to defend against phagocytes in the environment and animal hosts. The simplest member is fumiquinazoline F (FQF) with a 6-6-6 tricyclic core derived from anthranilic acid (Ant), tryptophan (Trp), and alanine (Ala). The trimodular NRPS fmqA is responsible for FQF formation. Modules 1, 2 and 3 of fmqA are predicted to activate and load Ant, Trp and Ala, respectively, providing for the assembly of an Ant-Trp-Ala-S-enzyme intermediate that would undergo double cyclization for chain release and generation of the tricyclic 6-6-6 product fumiquinazoline F. The presence of an E domain predicted for module 2 of fmqA is consistent with epimerization of L-Trp to D-Trp during assembly to generate the R-stereocenter at C14 of FQF. The FAD-dependent monooxygenase fmqB and the monomodular NRPS fmqC then maturate FQF to FQA. FmqB oxidizes the 2',3'-double bond of the indole side chain of FQF, and fmqC activates L-Ala as the adenylate, installs it as the pantetheinyl thioester on its carrier protein domain, and acylates the oxidized indole for subsequent intramolecular cyclization to create the 6-5-5-imidazolindolone of FQA. The FAD-linked oxidoreductase fmqD introduces a third layer of scaffold complexity by converting FQA to the spirohemiaminal FQC, presumably by catalyzing the formation of a transient imine within the pyrazinone ring. FQC subsequently converts nonenzymatically to the known cyclic aminal FQD. The sequence is that of Nonribosomal peptide synthetase fmqC from Aspergillus fumigatus (strain ATCC MYA-4609 / CBS 101355 / FGSC A1100 / Af293) (Neosartorya fumigata).